A 783-amino-acid chain; its full sequence is Rho GTPase-activating protein gacR (783 aa).

Residues 138–188 (AKNRFDKARLSFDEASEQFKQLRKKQNNINNEKLLEAEEDLDYATQQFSDI) are a coiled coil. The disordered stretch occupies residues 262 to 299 (QFEQTNSSRTISLPPPPPPKPTSSTPSSSPSPSPSSSI). The span at 283–299 (TSSTPSSSPSPSPSSSI) shows a compositional bias: low complexity. The Rho-GAP domain maps to 319-509 (MALSTITERE…FIISNFNNIF (191 aa)). The span at 527–539 (GSSGGGGGGGSSG) shows a compositional bias: gly residues. A disordered region spans residues 527-745 (GSSGGGGGGG…TTNSRPLSNS (219 aa)). Composition is skewed to low complexity over residues 568 to 589 (SVNT…ASSA), 599 to 630 (PSSS…NINP), 641 to 651 (PKKISSSSNSL), and 661 to 698 (SIPE…RSST). The segment covering 706–738 (NRVSMYLQNSNTGVPLPSQKPQRVISNNNTTTN) has biased composition (polar residues).

The protein localises to the cytoplasm. Functionally, rho GTPase-activating protein involved in the signal transduction pathway. The chain is Rho GTPase-activating protein gacR (gacR) from Dictyostelium discoideum (Social amoeba).